The following is a 447-amino-acid chain: Cellulosome-anchoring protein (447 aa).

Residues 1–29 form the signal peptide; sequence MKRIKRILAVLTIFALLATINAFTFVSLA. The region spanning 30–180 is the Cohesin domain; sequence QTNTIEIIIG…EIIEASAPEA (151 aa). Positions 30 to 180 are receptor binding site for duplicated segment of CipA; it reads QTNTIEIIIG…EIIEASAPEA (151 aa). The segment at 177-247 is disordered; it reads APEATPTPGS…EHAPFLKGYP (71 aa). Residues 188–200 are compositionally biased toward gly residues; the sequence is AGSGAGGGTGSSG. Over residues 201 to 223 the composition is skewed to low complexity; sequence SGQPSATPTPTATEKPSTTPKTT. 3 consecutive SLH domains span residues 216-280, 281-344, and 345-408; these read PSTT…AGKN, SSIT…EQGT, and DVKT…GAVL. One can recognise an SLH 4; truncated domain in the interval 409–429; it reads EFTDVPVNYWAYKDIAEGVIY.

Its subcellular location is the secreted. The protein resides in the cell wall. It localises to the S-layer. Anchors the cellulosome to the cell surface by binding the duplicated segment that is present at the C-terminal end of CipA. This is Cellulosome-anchoring protein (ancA) from Acetivibrio thermocellus (strain ATCC 27405 / DSM 1237 / JCM 9322 / NBRC 103400 / NCIMB 10682 / NRRL B-4536 / VPI 7372) (Clostridium thermocellum).